A 503-amino-acid chain; its full sequence is ATP synthase subunit alpha (503 aa).

G169–T176 is an ATP binding site.

This sequence belongs to the ATPase alpha/beta chains family. As to quaternary structure, F-type ATPases have 2 components, CF(1) - the catalytic core - and CF(0) - the membrane proton channel. CF(1) has five subunits: alpha(3), beta(3), gamma(1), delta(1), epsilon(1). CF(0) has three main subunits: a(1), b(2) and c(9-12). The alpha and beta chains form an alternating ring which encloses part of the gamma chain. CF(1) is attached to CF(0) by a central stalk formed by the gamma and epsilon chains, while a peripheral stalk is formed by the delta and b chains.

Its subcellular location is the cell membrane. It carries out the reaction ATP + H2O + 4 H(+)(in) = ADP + phosphate + 5 H(+)(out). Functionally, produces ATP from ADP in the presence of a proton gradient across the membrane. The alpha chain is a regulatory subunit. The polypeptide is ATP synthase subunit alpha (Lactobacillus helveticus (strain DPC 4571)).